Consider the following 78-residue polypeptide: MKNGIHPEYKKLLIKVGSNIFETMSTHPIGEILMDVDFRKHPAWNKDSGNVVNQSNKSVSDFNKRFAGLSFDSKKEAS.

Belongs to the bacterial ribosomal protein bL31 family. Type A subfamily. In terms of assembly, part of the 50S ribosomal subunit.

Functionally, binds the 23S rRNA. The protein is Large ribosomal subunit protein bL31 of Rickettsia prowazekii (strain Madrid E).